The following is a 264-amino-acid chain: E3 ubiquitin-protein ligase MARCHF8 (264 aa).

Positions 15 to 47 (LGHSVSRSSNISKAGSPTSVSAPSRFPRTSVTP) are disordered. Residues 16 to 47 (GHSVSRSSNISKAGSPTSVSAPSRFPRTSVTP) are compositionally biased toward polar residues. The RING-CH-type zinc-finger motif lies at 45-106 (VTPSSQDICR…ELCKFEFIME (62 aa)). Positions 53, 56, 70, 72, 80, 83, 96, and 99 each coordinate Zn(2+). 2 helical membrane-spanning segments follow: residues 130–150 (CSVT…YVLI) and 170–190 (FWTK…FMYV).

It is found in the cytoplasmic vesicle membrane. Its subcellular location is the lysosome membrane. The protein resides in the early endosome membrane. It catalyses the reaction S-ubiquitinyl-[E2 ubiquitin-conjugating enzyme]-L-cysteine + [acceptor protein]-L-lysine = [E2 ubiquitin-conjugating enzyme]-L-cysteine + N(6)-ubiquitinyl-[acceptor protein]-L-lysine.. Its pathway is protein modification; protein ubiquitination. E3 ubiquitin-protein ligase that mediates ubiquitination of cd86 and MHC class II proteins, such as hla-dr alpha and beta, and promotes their subsequent endocytosis and sorting to lysosomes via multivesicular bodies. This Xenopus laevis (African clawed frog) protein is E3 ubiquitin-protein ligase MARCHF8 (marchf8).